The following is a 1188-amino-acid chain: DNA-directed RNA polymerase subunit beta (1188 aa).

This sequence belongs to the RNA polymerase beta chain family. In terms of assembly, the RNAP catalytic core consists of 2 alpha, 1 beta, 1 beta' and 1 omega subunit. When a sigma factor is associated with the core the holoenzyme is formed, which can initiate transcription.

The enzyme catalyses RNA(n) + a ribonucleoside 5'-triphosphate = RNA(n+1) + diphosphate. Its function is as follows. DNA-dependent RNA polymerase catalyzes the transcription of DNA into RNA using the four ribonucleoside triphosphates as substrates. In Streptococcus gordonii (strain Challis / ATCC 35105 / BCRC 15272 / CH1 / DL1 / V288), this protein is DNA-directed RNA polymerase subunit beta.